The following is a 122-amino-acid chain: UPF0145 protein Bmul_3577/BMULJ_04940 (122 aa).

This sequence belongs to the UPF0145 family.

The sequence is that of UPF0145 protein Bmul_3577/BMULJ_04940 from Burkholderia multivorans (strain ATCC 17616 / 249).